A 235-amino-acid chain; its full sequence is Ubiquinone biosynthesis O-methyltransferase (235 aa).

The S-adenosyl-L-methionine site is built by arginine 39, glycine 59, aspartate 80, and methionine 124.

The protein belongs to the methyltransferase superfamily. UbiG/COQ3 family.

The catalysed reaction is a 3-demethylubiquinol + S-adenosyl-L-methionine = a ubiquinol + S-adenosyl-L-homocysteine + H(+). It catalyses the reaction a 3-(all-trans-polyprenyl)benzene-1,2-diol + S-adenosyl-L-methionine = a 2-methoxy-6-(all-trans-polyprenyl)phenol + S-adenosyl-L-homocysteine + H(+). It participates in cofactor biosynthesis; ubiquinone biosynthesis. Its function is as follows. O-methyltransferase that catalyzes the 2 O-methylation steps in the ubiquinone biosynthetic pathway. This chain is Ubiquinone biosynthesis O-methyltransferase, found in Vibrio campbellii (strain ATCC BAA-1116).